We begin with the raw amino-acid sequence, 470 residues long: MNPNQKIIAIGSASLGILILNVILHVVSIIVTVLVLNNNGTGLNCNRTIIREYNETVRVERITQWYNTSTIEYIERPSNEYYMNNTEPLCEAQGFAPFSKDNGIRIGSRGHVFVIREPFVSCSPSECRTFFLTQGSLLNDKHSNGTMKDRSPYRTLMSVKIGQSPNVYQARFEAVAWSATACHDGKKWMTVGVTGPDNQAVAVVNYGGVPVDIINSWAGDILRTQESSCTCIKGDCYWVMTDGPANRQAKYRIFKAKDGRIIGQTDISFNGGHIEECSCYPNEGKVECICRDNWTGTNRPILVISSDLSYTVGYLCAGIPTDTPRGEDSQFTGSCTSPLGNKGYGVKGFGFRQGTDVWAGRTISRTSRSGFEIIKIRNGWTQNSKDQIRRQVIIDNLNWSGYSGSFTLPVELTKKGCLVPCFWVEMIRGKPEETTIWTSSSSIVMCGVDHKIASWSWHDGAILPFDIDKM.

Residues 1 to 14 (MNPNQKIIAIGSAS) are Intravirion-facing. Residues 11-32 (GSASLGILILNVILHVVSIIVT) are involved in apical transport and lipid raft association. Residues 15–35 (LGILILNVILHVVSIIVTVLV) traverse the membrane as a helical segment. The tract at residues 32–86 (TVLVLNNNGTGLNCNRTIIREYNETVRVERITQWYNTSTIEYIERPSNEYYMNNT) is hypervariable stalk region. Topologically, residues 36–470 (LNNNGTGLNC…AILPFDIDKM (435 aa)) are virion surface. N-linked (GlcNAc...) asparagine; by host glycans are attached at residues Asn-39, Asn-46, Asn-54, Asn-67, and Asn-84. The interval 89–470 (LCEAQGFAPF…AILPFDIDKM (382 aa)) is head of neuraminidase. 8 disulfides stabilise this stretch: Cys-90/Cys-417, Cys-122/Cys-127, Cys-182/Cys-229, Cys-231/Cys-236, Cys-277/Cys-290, Cys-279/Cys-288, Cys-316/Cys-335, and Cys-421/Cys-446. Arg-116 is a substrate binding site. N-linked (GlcNAc...) asparagine; by host glycosylation occurs at Asn-144. Asp-149 functions as the Proton donor/acceptor in the catalytic mechanism. Residue Arg-150 participates in substrate binding. Position 275 to 276 (275 to 276 (EE)) interacts with substrate. Residue Arg-291 coordinates substrate. Asp-292 is a Ca(2+) binding site. N-linked (GlcNAc...) asparagine; by host glycosylation occurs at Asn-293. The Ca(2+) site is built by Gly-296 and Asp-322. A substrate-binding site is contributed by Arg-368. Asn-398 carries an N-linked (GlcNAc...) asparagine; by host glycan. The active-site Nucleophile is the Tyr-402.

It belongs to the glycosyl hydrolase 34 family. In terms of assembly, homotetramer. The cofactor is Ca(2+). N-glycosylated.

It is found in the virion membrane. The protein resides in the host apical cell membrane. The catalysed reaction is Hydrolysis of alpha-(2-&gt;3)-, alpha-(2-&gt;6)-, alpha-(2-&gt;8)- glycosidic linkages of terminal sialic acid residues in oligosaccharides, glycoproteins, glycolipids, colominic acid and synthetic substrates.. Inhibited by the neuraminidase inhibitors zanamivir (Relenza) and oseltamivir (Tamiflu). These drugs interfere with the release of progeny virus from infected cells and are effective against all influenza strains. Resistance to neuraminidase inhibitors is quite rare. Its function is as follows. Catalyzes the removal of terminal sialic acid residues from viral and cellular glycoconjugates. Cleaves off the terminal sialic acids on the glycosylated HA during virus budding to facilitate virus release. Additionally helps virus spread through the circulation by further removing sialic acids from the cell surface. These cleavages prevent self-aggregation and ensure the efficient spread of the progeny virus from cell to cell. Otherwise, infection would be limited to one round of replication. Described as a receptor-destroying enzyme because it cleaves a terminal sialic acid from the cellular receptors. May facilitate viral invasion of the upper airways by cleaving the sialic acid moieties on the mucin of the airway epithelial cells. Likely to plays a role in the budding process through its association with lipid rafts during intracellular transport. May additionally display a raft-association independent effect on budding. Plays a role in the determination of host range restriction on replication and virulence. Sialidase activity in late endosome/lysosome traffic seems to enhance virus replication. This Aves (Horse) protein is Neuraminidase.